The chain runs to 119 residues: Methylglyoxal synthase (119 aa).

An MGS-like domain is found at 1–119; that stretch reads MRIALIAHDK…GTADLIIRQF (119 aa). Residues histidine 8, lysine 12, 34–37, and 54–55 each bind substrate; these read TGTT and SG. The active-site Proton donor/acceptor is aspartate 60. Histidine 87 contacts substrate.

Belongs to the methylglyoxal synthase family.

It carries out the reaction dihydroxyacetone phosphate = methylglyoxal + phosphate. Its function is as follows. Catalyzes the formation of methylglyoxal from dihydroxyacetone phosphate. This Clostridium botulinum (strain Alaska E43 / Type E3) protein is Methylglyoxal synthase.